The following is a 64-amino-acid chain: Large ribosomal subunit protein bL35 (64 aa).

The span at 1 to 42 (MPKAKTHSGASKRFRRTGTGKIVRQKANRRHLLEHKPTKRTR) shows a compositional bias: basic residues. The interval 1-64 (MPKAKTHSGA…NSRINKLLNG (64 aa)) is disordered. A compositionally biased stretch (polar residues) spans 48-58 (TTVSAADNSRI).

This sequence belongs to the bacterial ribosomal protein bL35 family.

This chain is Large ribosomal subunit protein bL35, found in Mycolicibacterium smegmatis (strain ATCC 700084 / mc(2)155) (Mycobacterium smegmatis).